The following is a 621-amino-acid chain: SH2B adapter protein 2 (621 aa).

Tyrosine 47 is modified (phosphotyrosine). A Phosphoserine modification is found at serine 130. Residues 144–165 are disordered; that stretch reads RASPEPEGGATPKTTEPVSEPR. The region spanning 186 to 299 is the PH domain; the sequence is DIQREGALRF…WVADIQGCVD (114 aa). Position 303 is a phosphoserine (serine 303). The 99-residue stretch at 409–507 folds into the SH2 domain; the sequence is WFHGTLSRVK…SADITLRSYV (99 aa). 2 disordered regions span residues 507-528 and 548-609; these read VRAQ…PVPA and PPTS…ATLG. Residues 552–570 show a composition bias toward low complexity; the sequence is PSNGAGASSSSGSSSSATS. Residue serine 597 is modified to Phosphoserine. A Phosphotyrosine modification is found at tyrosine 618.

Belongs to the SH2B adapter family. In terms of assembly, homodimer. Interacts with KIT/c-KIT, SHC1, EPOR, PDGFR, VAV1 and VAV3. Interacts (via N-terminal region) with SHC1. Interacts (via the phosphorylated C-terminus) with GRB2. Interacts (via its SH2 domain) with EPOR, INSR and KIT. Interacts with GRB2 after B-cell antigen receptor stimulation. Interacts (via PH domain) with VAV3. Interacts with NTRK1, NTRK2 and NTRK3 (phosphorylated); after stimulation of the receptor by its extracellular ligand and subsequent autophosphorylation of the receptor. Binds INSR, GRB2, ASB6 and CAP. Insulin stimulation leads to dissociation of CAP. Binds CBS only when SH2B2/APS has become phosphorylated. INSR binding does not depend on the phosphorylation of SH2B2/APS. In terms of processing, phosphorylated on a tyrosine residue by NTRK1, NTRK2, NTRK3 and INSR after stimulation of the receptor by its extracellular ligand. Tyrosine phosphorylated by JAK2, KIT and other kinases activated by B-cell receptor in response to stimulation with cytokines, IL3, IL5, PDGF, IGF1, IGF2, CSF2/GM-CSF and cross-linking of the B-cell receptor complex. In terms of tissue distribution, detected in embryonic brain, spinal cord and cortical neurons.

The protein resides in the cytoplasm. The protein localises to the membrane. Its function is as follows. Adapter protein for several members of the tyrosine kinase receptor family. Involved in multiple signaling pathways. Binds to EPOR and suppresses EPO-induced STAT5 activation, possibly through a masking effect on STAT5 docking sites in EPOR. Suppresses PDGF-induced mitogenesis. Involved in stimulation of glucose uptake by insulin. Involved in coupling from immunoreceptor to Ras signaling. Acts as a negative regulator of cytokine signaling in collaboration with CBL. Induces cytoskeletal reorganization and neurite outgrowth in cultured neurons. In Rattus norvegicus (Rat), this protein is SH2B adapter protein 2 (Sh2b2).